The primary structure comprises 697 residues: MMRPVVVKEKRVNESQIHVVEEEVRQAKTMDRDIVTHAMKQSFAKLNPKVMIKNPIMFVVEIGFIITFILSFLPSHSSSVPGWFNITVSFILLFTVLFANFAEALAEGRGKAQADSLKHSKKDVFANVVKENGNIVQVSATDLRKGDVVIVKQGEMIPSDGEVIKGLASVDESAITGESAPVIKEAGGDFCSVTGGTMVVSDEITIIITSNPGESFIDKMISLVEGAARQKTPNEIALNTVLTSLTFIFLIVVVTLPIFTNYLGFQIDTAVLVALLVCLIPTTIGGLLSAIGIAGMDRVTKFNVLAMSGKAVEAAGDINTIILDKTGTITFGNRMAHTLLPVGNETIEQVGKWAAISSVLDETPEGRSVIEYVQAKSISYNRELAEQGEFVPFKAETRMSGVDLQDGTKVRKGAVGSVIEWVQSQGGTIPKDVNQKADFISKEGGTPLVVAVNNRIYGLIYLKDTVKPGMRERFEQLRQMGIKTVMCTGDNPLTAATIAKEAGVDEFVAECKPEDKIAVIKAEQDKGKLVAMTGDGTNDAPALAQADVGLAMNSGTTAAKEAANMIDLDSNPTKIIEVVGIGKQLLMTRGALTTFSIANDIAKYFAIIPAMFTLAIPQMEALNIMKLTSPLSAILSALLFNAVIIPLLIPLAMKGIAYKPMSSNALLGRNLLIYGLGGVIVPFIGIKVIDMIVGLFI.

Transmembrane regions (helical) follow at residues 55–75 (PIMF…FLPS), 82–102 (GWFN…ANFA), 245–265 (LTFI…YLGF), and 271–291 (VLVA…LSAI). The 4-aspartylphosphate intermediate role is filled by Asp-324. ATP-binding positions include Asp-361, Glu-365, 393 to 400 (FKAETRMS), and Lys-412. The Mg(2+) site is built by Asp-535 and Asp-539. 3 consecutive transmembrane segments (helical) span residues 605 to 625 (FAII…LNIM), 633 to 653 (AILS…PLAM), and 677 to 697 (GGVI…GLFI).

The protein belongs to the cation transport ATPase (P-type) (TC 3.A.3) family. Type IA subfamily. The system is composed of three essential subunits: KdpA, KdpB and KdpC.

It localises to the cell membrane. The enzyme catalyses K(+)(out) + ATP + H2O = K(+)(in) + ADP + phosphate + H(+). Functionally, part of the high-affinity ATP-driven potassium transport (or Kdp) system, which catalyzes the hydrolysis of ATP coupled with the electrogenic transport of potassium into the cytoplasm. This subunit is responsible for energy coupling to the transport system and for the release of the potassium ions to the cytoplasm. This Bacillus cereus (strain AH187) protein is Potassium-transporting ATPase ATP-binding subunit.